Consider the following 292-residue polypeptide: Syntaxin-19 (292 aa).

Residues 1–24 (MKDRLPELKQRTKETELSKDKDVP) are compositionally biased toward basic and acidic residues. The segment at 1–28 (MKDRLPELKQRTKETELSKDKDVPTTEA) is disordered. A coiled-coil region spans residues 46-122 (VAERHLHEIQ…VKEVKKSEDE (77 aa)). A t-SNARE coiled-coil homology domain is found at 209–271 (LSEIEQRHKE…NTTKEKFGLA (63 aa)).

It belongs to the syntaxin family. As to quaternary structure, interacts with EGFR.

The protein localises to the cell membrane. It is found in the cytoplasm. In terms of biological role, plays a role in endosomal trafficking of the epidermal growth factor receptor (EGFR). In Bos taurus (Bovine), this protein is Syntaxin-19 (STX19).